An 833-amino-acid chain; its full sequence is MPIMYNTGEWFKVRPDYYRKVELATPDWPLDLDLEYMWVEVAPYGGPLAVTRDPTKLVPVKGNARPMIRIFDTTGREMGHILWNHGKLIAMGWSDMEELICIQENATVFVYDMFGREKESYSIGDEASVTKIVEGKVFQSSAGTGVAVMTTSGRVFLKQNSSKTERKLPDIPNSSMNCSCWEIVTEGRNSYCLLGRDREVIKLFPGETVGTITANLFEKPHERIIKISVSYNHQHLALYTNTGLLWLGSVDMRQKYCEFDTGRKDMPLQMEWIMNSDNSEADAVVISYPSYLLIVNRNADRSDFPYDPVMFLVAEMDGVRIITQSSHEIIQRLPKCVENIFAVNSQEPASYLFEAQKKFEEKSYKSDEYLSMCREKIDLAVSECIEAASYEFCPETQKSLLRTAYFGKGFIRNHNPDEYMRIMRILRVLNTLRHERIAMPITFKQFSHLNTEVILSRLVFRKHYAIAIQVAKHLNLPESWILEHWAYHKVMNDPNDTEVARKITEKFKNPSVEGISFCNIASKAHQAGRDDLAIKLLELESRASLHVPLLLKMRKFDRAVGSATQSGDTELITQVLLEMKMHMMLSNLHMTIRDHPLALNIYKKIMRESNRAGLYGIYNTEDDQKAIAEYHFQNAIETEGLESNLSMIGNAYAQGRCTLEAELCADTSRLIKLQKTLSTKYNVSLNGLSIHETIQELLLIGELKEAERIRSEFKVPDRRFWWLRILTLSSQHKWEELEKLAKSKKSPIGYDPFVEVCLKQDNVMEARKYIPRCRDNRRVVWYMRANLFNEAIDSAFEQRDVHSLFELQKNQAIVNNGTLLSKVCDCIAMLEGK.

It belongs to the VPS16 family. As to quaternary structure, component of the homotypic fusion and vacuole protein sorting (HOPS) complex, composed of Vps16A, car/Vps33A, dor/Vps18, Vps39, Vps11 and lt/Vps41. Interacts with Syx17 (via SNARE domain); the interaction may involve multiple components of the HOPS complex and may promote assembly of the Syx17-Snap29-Vamp7 trans-SNARE complex. Component of the class C core vacuole/endosome tethering (CORVET) complex composed of at least Vps8, dor/Vps18, car/Vps33A and Vps16A; unlike in other species, Vps11 is not part of the Drosophila complex. Due to the reduced number of components the Drosophila CORVET complex is often referred to as the miniCORVET complex. The tethering complex core made up of Vps16A, car/Vps33A and dor/Vps18 and shared by both HOPS and CORVET, preferentially associates with CORVET-specific Vps8 over HOPS-specific lt/Vps41. Interacts with Rab2 (GTP-bound form).

The protein localises to the late endosome membrane. It is found in the lysosome membrane. Its subcellular location is the cytoplasmic vesicle. The protein resides in the autophagosome. In terms of biological role, core component of the class C core vacuole/endosome tethering (CORVET) and the homotypic fusion and vacuole protein sorting (HOPS) tethering complexes involved in endo-lysosomal vesicle trafficking and lysosome biogenesis. The CORVET complex facilitates docking and fusion of endosomal vesicles during endosome maturation, acts upstream of HOPS, but is not involved in autophagic flux. The CORVET complex may cooperate with the early endosomal tether Rbsn-5 to mediate endosomal fusion. The HOPS complex facilitates docking and fusion of lysosomes with late endosomes and several other types of vesicles. The HOPS complex is also involved in autophagy and crinophagy (the elimination of unused secretory granules through their fusion with lysosomes). The HOPS complex mediates autophagocitic flux, probably by binding autophagosome-associated Syx17/syntaxin 17, promoting assembly of the trans-SNARE complex and instigating autophagosome-lysosome fusion. Independent of Syx17/syntaxin 17, HOPS is involved in biosynthetic transport to lysosomes and lysosome-related organelles such as eye-pigment granules. Required for endocytic degradation of boss/bride of sevenless and N/Notch in developing ommatidia. This Drosophila melanogaster (Fruit fly) protein is Vacuolar protein sorting-associated protein 16 homolog.